Consider the following 640-residue polypeptide: ATP-dependent DNA helicase YoaA (640 aa).

A Helicase ATP-binding domain is found at 16–278; it reads ELSQNIKGFR…KDMQQLGTTS (263 aa). 51–58 lines the ATP pocket; sequence AGTGTGKT. Cys114 is a [4Fe-4S] cluster binding site. Residues 125 to 128 carry the DEAH box motif; the sequence is GVLG. [4Fe-4S] cluster-binding residues include Cys174, Cys179, and Cys185. The short motif at 231–234 is the DEAH box element; the sequence is DEAH. The Helicase C-terminal domain occupies 458–634; it reads SLGEILLPVI…SRTRDLNKVI (177 aa).

This sequence belongs to the helicase family. DinG subfamily. [4Fe-4S] cluster is required as a cofactor.

It carries out the reaction Couples ATP hydrolysis with the unwinding of duplex DNA at the replication fork by translocating in the 5'-3' direction. This creates two antiparallel DNA single strands (ssDNA). The leading ssDNA polymer is the template for DNA polymerase III holoenzyme which synthesizes a continuous strand.. The catalysed reaction is ATP + H2O = ADP + phosphate + H(+). Functionally, probably a 5'-3' DNA helicase. The chain is ATP-dependent DNA helicase YoaA from Haemophilus influenzae (strain ATCC 51907 / DSM 11121 / KW20 / Rd).